A 614-amino-acid chain; its full sequence is Zinc metalloproteinase-disintegrin-like BmMP (614 aa).

A signal peptide spans 1-20 (MIQALLVTICLAVFPYQGSS). Positions 21–188 (IILESGNVND…WESDEPIRNA (168 aa)) are excised as a propeptide. Residue asparagine 187 is glycosylated (N-linked (GlcNAc...) asparagine). The region spanning 205–401 (KYIEFYVAVD…DRPQCILNKP (197 aa)) is the Peptidase M12B domain. Intrachain disulfides connect cysteine 316–cysteine 396, cysteine 356–cysteine 380, cysteine 359–cysteine 364, cysteine 412–cysteine 441, cysteine 423–cysteine 436, cysteine 425–cysteine 431, cysteine 435–cysteine 458, cysteine 449–cysteine 455, cysteine 454–cysteine 480, cysteine 467–cysteine 487, cysteine 474–cysteine 506, cysteine 499–cysteine 511, cysteine 518–cysteine 568, cysteine 533–cysteine 576, cysteine 546–cysteine 556, cysteine 563–cysteine 602, and cysteine 596–cysteine 607. Histidine 341 contacts Zn(2+). Residue glutamate 342 is part of the active site. Residues histidine 345 and histidine 351 each contribute to the Zn(2+) site. The 87-residue stretch at 409-495 (PAICGNYFVE…ECPTDIFRRN (87 aa)) folds into the Disintegrin domain. The D/ECD-tripeptide signature appears at 473–475 (DCD).

It belongs to the venom metalloproteinase (M12B) family. P-III subfamily. P-IIIa sub-subfamily. Monomer. Zn(2+) is required as a cofactor. In terms of tissue distribution, expressed by the venom gland.

The protein resides in the secreted. Its function is as follows. Snake venom zinc metalloproteinase that inhibits platelet aggregation and degrades fibrinogen. This chain is Zinc metalloproteinase-disintegrin-like BmMP, found in Bungarus multicinctus (Many-banded krait).